A 154-amino-acid polypeptide reads, in one-letter code: Small ribosomal subunit protein uS7 (154 aa).

This sequence belongs to the universal ribosomal protein uS7 family.

In Nicotiana plumbaginifolia (Leadwort-leaved tobacco), this protein is Small ribosomal subunit protein uS7 (RPS5).